Reading from the N-terminus, the 361-residue chain is Molybdenum import ATP-binding protein ModC 1 (361 aa).

The ABC transporter domain maps to 1–237 (MPADGIRARF…LDLPTAFHED (237 aa)). 35 to 42 (GHSGSGKT) lines the ATP pocket. A Mop domain is found at 296-361 (DSSITNVLPA…AQIKAVALLG (66 aa)).

It belongs to the ABC transporter superfamily. Molybdate importer (TC 3.A.1.8) family. As to quaternary structure, the complex is composed of two ATP-binding proteins (ModC), two transmembrane proteins (ModB) and a solute-binding protein (ModA).

Its subcellular location is the cell inner membrane. The enzyme catalyses molybdate(out) + ATP + H2O = molybdate(in) + ADP + phosphate + H(+). Its function is as follows. Part of the ABC transporter complex ModABC involved in molybdenum import. Responsible for energy coupling to the transport system. This is Molybdenum import ATP-binding protein ModC 1 from Azotobacter vinelandii.